The chain runs to 269 residues: Malonyl-[acyl-carrier protein] O-methyltransferase (269 aa).

The protein belongs to the methyltransferase superfamily.

It carries out the reaction malonyl-[ACP] + S-adenosyl-L-methionine = malonyl-[ACP] methyl ester + S-adenosyl-L-homocysteine. It participates in cofactor biosynthesis; biotin biosynthesis. Functionally, converts the free carboxyl group of a malonyl-thioester to its methyl ester by transfer of a methyl group from S-adenosyl-L-methionine (SAM). It allows to synthesize pimeloyl-ACP via the fatty acid synthetic pathway. This chain is Malonyl-[acyl-carrier protein] O-methyltransferase, found in Bacillus cereus (strain ATCC 14579 / DSM 31 / CCUG 7414 / JCM 2152 / NBRC 15305 / NCIMB 9373 / NCTC 2599 / NRRL B-3711).